We begin with the raw amino-acid sequence, 317 residues long: Ribosomal RNA small subunit methyltransferase H (317 aa).

S-adenosyl-L-methionine is bound by residues 30–32 (GGH), Asp-50, Tyr-78, Asp-95, and Gln-102.

This sequence belongs to the methyltransferase superfamily. RsmH family.

Its subcellular location is the cytoplasm. It carries out the reaction cytidine(1402) in 16S rRNA + S-adenosyl-L-methionine = N(4)-methylcytidine(1402) in 16S rRNA + S-adenosyl-L-homocysteine + H(+). In terms of biological role, specifically methylates the N4 position of cytidine in position 1402 (C1402) of 16S rRNA. The chain is Ribosomal RNA small subunit methyltransferase H from Nitrosomonas eutropha (strain DSM 101675 / C91 / Nm57).